The sequence spans 148 residues: Arginine repressor (148 aa).

Belongs to the ArgR family.

Its subcellular location is the cytoplasm. Its pathway is amino-acid biosynthesis; L-arginine biosynthesis [regulation]. Its function is as follows. Regulates arginine biosynthesis genes. The sequence is that of Arginine repressor from Acidobacterium capsulatum (strain ATCC 51196 / DSM 11244 / BCRC 80197 / JCM 7670 / NBRC 15755 / NCIMB 13165 / 161).